The following is an 83-amino-acid chain: Bowman-Birk type seed trypsin and chymotrypsin inhibitor (83 aa).

7 cysteine pairs are disulfide-bonded: Cys-18–Cys-72, Cys-19–Cys-34, Cys-22–Cys-68, Cys-24–Cys-32, Cys-42–Cys-49, Cys-46–Cys-61, and Cys-51–Cys-59.

The protein belongs to the Bowman-Birk serine protease inhibitor family.

This chain is Bowman-Birk type seed trypsin and chymotrypsin inhibitor, found in Vigna unguiculata (Cowpea).